The chain runs to 1123 residues: Ubiquitin carboxyl-terminal hydrolase 43 (1123 aa).

The segment at 1 to 102 (MDLGPGDAAG…DGARPPGAQG (102 aa)) is disordered. Residues 17–28 (RPRRRRSLRRLF) show a composition bias toward basic residues. Positions 29 to 39 (SRFLLALGSRS) are enriched in low complexity. Residues 101-710 (QGLKNHGNTC…GAYILFYQKR (610 aa)) form the USP domain. The active-site Nucleophile is Cys110. Positions 202 to 221 (EGSSRGPVSEKLPPEATKTS) are disordered. His668 acts as the Proton acceptor in catalysis. At Arg746 the chain carries Asymmetric dimethylarginine. Disordered regions lie at residues 795-826 (ISMK…EKPP), 854-886 (TGTA…IERG), 959-1049 (FQMG…RIPE), and 1068-1099 (SSLR…QASY). The residue at position 969 (Ser969) is a Phosphoserine. A compositionally biased stretch (basic and acidic residues) spans 979–990 (KDSRRGTSELDR). The span at 1016–1027 (VSPQVPPVSLVS) shows a compositional bias: low complexity. At Ser1041 the chain carries Phosphoserine.

It belongs to the peptidase C19 family. Expressed in brain, aorta and lung at low levels.

It catalyses the reaction Thiol-dependent hydrolysis of ester, thioester, amide, peptide and isopeptide bonds formed by the C-terminal Gly of ubiquitin (a 76-residue protein attached to proteins as an intracellular targeting signal).. May recognize and hydrolyze the peptide bond at the C-terminal Gly of ubiquitin. Involved in the processing of poly-ubiquitin precursors as well as that of ubiquitinated proteins. This is Ubiquitin carboxyl-terminal hydrolase 43 (USP43) from Homo sapiens (Human).